A 327-amino-acid polypeptide reads, in one-letter code: Tagatose 1,6-diphosphate aldolase 2 (327 aa).

Belongs to the aldolase LacD family.

It carries out the reaction D-tagatofuranose 1,6-bisphosphate = D-glyceraldehyde 3-phosphate + dihydroxyacetone phosphate. It functions in the pathway carbohydrate metabolism; D-tagatose 6-phosphate degradation; D-glyceraldehyde 3-phosphate and glycerone phosphate from D-tagatose 6-phosphate: step 2/2. In Streptococcus pyogenes serotype M3 (strain ATCC BAA-595 / MGAS315), this protein is Tagatose 1,6-diphosphate aldolase 2 (lacD2).